A 264-amino-acid chain; its full sequence is 3-methyl-2-oxobutanoate hydroxymethyltransferase (264 aa).

Residues Asp-45 and Asp-84 each coordinate Mg(2+). Residues 45-46, Asp-84, and Lys-112 contribute to the 3-methyl-2-oxobutanoate site; that span reads DS. Glu-114 is a binding site for Mg(2+). Glu-181 serves as the catalytic Proton acceptor.

Belongs to the PanB family. Homodecamer; pentamer of dimers. Mg(2+) serves as cofactor.

It is found in the cytoplasm. It carries out the reaction 3-methyl-2-oxobutanoate + (6R)-5,10-methylene-5,6,7,8-tetrahydrofolate + H2O = 2-dehydropantoate + (6S)-5,6,7,8-tetrahydrofolate. The protein operates within cofactor biosynthesis; (R)-pantothenate biosynthesis; (R)-pantoate from 3-methyl-2-oxobutanoate: step 1/2. In terms of biological role, catalyzes the reversible reaction in which hydroxymethyl group from 5,10-methylenetetrahydrofolate is transferred onto alpha-ketoisovalerate to form ketopantoate. This chain is 3-methyl-2-oxobutanoate hydroxymethyltransferase, found in Shewanella loihica (strain ATCC BAA-1088 / PV-4).